The chain runs to 177 residues: Large ribosomal subunit protein uL6 (177 aa).

Belongs to the universal ribosomal protein uL6 family. Part of the 50S ribosomal subunit.

Its function is as follows. This protein binds to the 23S rRNA, and is important in its secondary structure. It is located near the subunit interface in the base of the L7/L12 stalk, and near the tRNA binding site of the peptidyltransferase center. The chain is Large ribosomal subunit protein uL6 from Haemophilus influenzae (strain 86-028NP).